We begin with the raw amino-acid sequence, 511 residues long: Sodium/proline symporter (511 aa).

The next 13 membrane-spanning stretches (helical) occupy residues 16–36 (WQTY…AFTY), 53–73 (IGPY…WMIM), 84–104 (LSAM…YFVV), 138–158 (IISG…GFVS), 173–193 (FGLI…GYLA), 199–219 (FFQG…AMMN), 239–259 (LFKG…LGYF), 285–305 (ISWM…GIAF), 326–346 (VLFH…AIMS), 380–400 (FVMI…AIAW), 409–429 (LVGN…LFAL), 437–457 (AGAV…IAWI), and 466–486 (IFGL…TYVV).

The protein belongs to the sodium:solute symporter (SSF) (TC 2.A.21) family.

It localises to the cell membrane. The catalysed reaction is L-proline(in) + Na(+)(in) = L-proline(out) + Na(+)(out). In terms of biological role, catalyzes the sodium-dependent uptake of extracellular L-proline. Since most S.aureus strains are L-proline auxotrophs, this transporter may aid the bacterial persistence during an infection of tissues with low proline concentrations. The protein is Sodium/proline symporter of Staphylococcus aureus.